Reading from the N-terminus, the 844-residue chain is MSTETKETRPETKPEDLGTHTTVDVPGEEPLGELIADDVNEVVSDASATETDFSLSPSQSEQNIEEDGQNSLDDQSPLTELQPLPLPPPLPVEARISESLGEEESSDLVTEQQSQNPNAAEPGPRARKRRRRKRFFTEINANPAFSRNRRTSVGKEVDSEALIAMSVGFPVYSLTEEEIEANVVSIIGGKDQANYIVVRNHIIALWRSNVSNWLTRDHALESIRAEHKTLVDTAYNFLLEHGYINFGLAPVIKEAKLRSFDGVEPPNVVVVGAGLAGLVAARQLLSMGFRVLVLEGRDRPGGRVKTRKMKGGDGVEAMADVGGSVLTGINGNPLGVLARQLGLPLHKVRDICPLYLPNGELADASVDSKIEASFNKLLDRVCKLRQSMIEENKSVDVPLGEALETFRLVYGVAEDQQERMLLDWHLANLEYANATLLGNLSMAYWDQDDPYEMGGDHCFIPGGNEIFVHALAENLPIFYGSTVESIRYGSNGVLVYTGNKEFHCDMALCTVPLGVLKKGSIEFYPELPHKKKEAIQRLGFGLLNKVAMLFPCNFWGEEIDTFGRLTEDPSTRGEFFLFYSYSSVSGGPLLVALVAGDAAERFETLSPTDSVKRVLQILRGIYHPKGIVVPDPVQALCSRWGQDKFSYGSYSYVAVGSSGDDYDILAESVGDGRVFFAGEATNRQYPATMHGAFLSGMREAANILRVARRRASSSALNPNQICIDKEEEVDEEEDRCLDQLFETPDLTFGNFSVLFTPNSDEPESMSLLRVRIQMEKPESGLWLYGLVTRKQAIELGEMDGDELRNEYLREKLGLVPVERKSLSQEGESMISSLKAARLNRQIFD.

The segment covering 1-18 (MSTETKETRPETKPEDLG) has biased composition (basic and acidic residues). Residues 1-131 (MSTETKETRP…PGPRARKRRR (131 aa)) form a disordered region. Acidic residues predominate over residues 26-40 (PGEEPLGELIADDVN). Composition is skewed to polar residues over residues 46-62 (ASAT…QSEQ) and 107-118 (DLVTEQQSQNPN). The 102-residue stretch at 154 to 255 (GKEVDSEALI…FGLAPVIKEA (102 aa)) folds into the SWIRM domain. The FAD site is built by Glu295, Arg297, and Arg303. Positions 516–523 (LKKGSIEF) match the Nuclear localization signal motif. Glu679 lines the FAD pocket.

Belongs to the flavin monoamine oxidase family. Interacts with CZS. Interacts with OTU6/OTLD1. Requires FAD as cofactor. Expressed in the shoot and root apical regions of young seedlings. Expressed in cotyledons and inflorescences.

The protein resides in the nucleus. It localises to the cytoplasm. Its function is as follows. Probable histone demethylase that reduces the levels of histone H3 'Lys-4' methylation in chromatin of the floral repressor FLOWERING LOCUS C (FLC) and the sporophytically silenced floral repressor FWA. Seems to act in partial redundancy with FLOWERING LOCUS D (FLD) to repress FLC expression. Required for cytosine methylation of FWA. Controls primary seed dormancy by regulating DOG1 and abscisic acid signaling-related genes. In association with OTU6/OTLD1, involved in transcriptional gene repression via histone deubiquitination and demethylation. The chain is Lysine-specific histone demethylase 1 homolog 1 from Arabidopsis thaliana (Mouse-ear cress).